The chain runs to 430 residues: Evolutionarily conserved signaling intermediate in Toll pathway, mitochondrial (430 aa).

A mitochondrion-targeting transit peptide spans 1 to 48; it reads MSWVQATLLARGLCRAWGGICRAALPGTSISQVPRQLPRGLHCSAAPH. Residues 41-66 form a disordered region; that stretch reads LHCSAAPHSSEQSLVSSPPEPRQRPT. Residues 47–56 show a composition bias toward polar residues; sequence PHSSEQSLVS. K372 is covalently cross-linked (Glycyl lysine isopeptide (Lys-Gly) (interchain with G-Cter in ubiquitin)). A disordered region spans residues 400 to 430; it reads LHTSSAGLEEPPPPEDHEEDDSRQRQQQGQS. Over residues 411–420 the composition is skewed to acidic residues; it reads PPPEDHEEDD.

The protein belongs to the ECSIT family. As to quaternary structure, interacts with MAP3K1, SMAD4 and TRAF6. Interacts with SMAD1 only after BMP4-treatment. Part of the mitochondrial complex I assembly/MCIA complex that comprises at least the core subunits TMEM126B, NDUFAF1, ECSIT and ACAD9 and complement subunits such as COA1 and TMEM186. Interacts with NDUFAF1. Interacts with ACAD9. Interacts with TRIM59. Interacts with TMEM70 and TMEM242. Interacts (when ubiquitinated) with NF-kappa-B subunits RELA and NFKB1. Interacts with RIGI, IFIT1 and MAVS; these interactions promote RLR-mediated type I IFN induction. Interacts with SQSTM1; this interaction inhibits TLR4 signaling via functional regulation of the TRAF6-ECSIT complex. Interacts with cereblon/CRBN; this interaction inhibits the ubiquitination of ECSIT. Ubiquitinated on Lys-372; leading to translocation in the nucleus together with RELA and NFKB1 and expression of NF-kappa-B-dependent genes.

Its subcellular location is the cytoplasm. The protein resides in the nucleus. It localises to the mitochondrion. Adapter protein that plays a role in different signaling pathways including TLRs and IL-1 pathways or innate antiviral induction signaling. Plays a role in the activation of NF-kappa-B by forming a signal complex with TRAF6 and TAK1/MAP3K7 to activate TAK1/MAP3K7 leading to activation of IKKs. Once ubiquitinated, interacts with the dissociated RELA and NFKB1 proteins and translocates to the nucleus where it induces NF-kappa-B-dependent gene expression. Plays a role in innate antiviral immune response by bridging the pattern recognition receptors RIGI and MDA5/IFIT1 to the MAVS complex at the mitochondrion. Promotes proteolytic activation of MAP3K1. Involved in the BMP signaling pathway. Required for normal embryonic development. In terms of biological role, as part of the MCIA complex, involved in the assembly of the mitochondrial complex I. The chain is Evolutionarily conserved signaling intermediate in Toll pathway, mitochondrial from Macaca fascicularis (Crab-eating macaque).